A 1302-amino-acid chain; its full sequence is Ubiquitin conjugation factor E4 B (1302 aa).

N-acetylmethionine is present on methionine 1. A disordered region spans residues 1–155; it reads MEELSADEIR…EPSSGPEVSE (155 aa). Low complexity predominate over residues 16 to 33; the sequence is RLAGGQTSQPTTPLTSPQ. Phosphoserine occurs at positions 23 and 31. Over residues 51-64 the composition is skewed to polar residues; that stretch reads QSLGLNVHNMTPAT. Over residues 76–99 the composition is skewed to low complexity; it reads SQSSEGVSSLSSSPSNSLETQSQS. Residues serine 84, serine 88, serine 90, serine 101, serine 103, serine 105, and serine 124 each carry the phosphoserine modification. Residues 134 to 147 are compositionally biased toward basic and acidic residues; sequence NDRREKRSLSDKEP. Position 238 is a phosphoserine (serine 238). Polar residues predominate over residues 299 to 327; it reads AASQLAVPSTPLSPHSAASGTAAGSQPSS. A disordered region spans residues 299–406; sequence AASQLAVPST…SPSLGASGGA (108 aa). Over residues 340-374 the composition is skewed to low complexity; that stretch reads ASSGVSILSSSPSPPALASSPQAVPASSSRQRPSS. Residue serine 383 is modified to Phosphoserine. Residues 384–400 show a composition bias toward low complexity; sequence PSATSRRPSSLRISPSL. Phosphoserine is present on residues serine 803 and serine 969. The disordered stretch occupies residues 1057-1077; sequence NKEQWDQLPRDQQQARQSQLA. Positions 1066–1077 are enriched in low complexity; sequence RDQQQARQSQLA. Residues 1227–1300 enclose the U-box domain; it reads DAPDEFRDPL…QAWMREKQNS (74 aa). At serine 1265 the chain carries Phosphoserine.

It belongs to the ubiquitin conjugation factor E4 family. Interacts with VCP/p97. Interacts with STUB1/CHIP and UNC45B. Proteolytically cleaved by caspases during apoptosis. Cleaved efficiently at Asp-123 by caspase-6 and granzyme B. Cleaved with approximately 10-fold less efficiency at Asp-109 by caspase-3 and caspase-7. As to expression, expressed in differentiated myotubes (at protein level). Highest expression in ovary, testis, heart and skeletal muscle. Expression is low in colon, thymus and peripheral blood leukocytes. Almost undetectable in lung and spleen.

Its subcellular location is the cytoplasm. It is found in the nucleus. It carries out the reaction S-ubiquitinyl-[E2 ubiquitin-conjugating enzyme]-L-cysteine + [acceptor protein]-L-lysine = [E2 ubiquitin-conjugating enzyme]-L-cysteine + N(6)-ubiquitinyl-[acceptor protein]-L-lysine.. It functions in the pathway protein modification; protein ubiquitination. In terms of biological role, ubiquitin-protein ligase that probably functions as an E3 ligase in conjunction with specific E1 and E2 ligases. May also function as an E4 ligase mediating the assembly of polyubiquitin chains on substrates ubiquitinated by another E3 ubiquitin ligase. May regulate myosin assembly in striated muscles together with STUB1 and VCP/p97 by targeting myosin chaperone UNC45B for proteasomal degradation. This Homo sapiens (Human) protein is Ubiquitin conjugation factor E4 B.